The sequence spans 690 residues: UvrABC system protein B (690 aa).

The Helicase ATP-binding domain maps to 30–188 (QGVMDGQTNQ…QELISLHFVR (159 aa)). 43-50 (GVTGSGKT) serves as a coordination point for ATP. The short motif at 96 to 119 (YYDFYQPEAYIPTMDKYIAKDLKI) is the Beta-hairpin element. The region spanning 435–601 (QIDDLLEEIR…SIVKSVDQVL (167 aa)) is the Helicase C-terminal domain. The 36-residue stretch at 641-676 (YAMAEELRLEMQEAAESMEFEKAAYLRDEVTKLEDA) folds into the UVR domain.

This sequence belongs to the UvrB family. In terms of assembly, forms a heterotetramer with UvrA during the search for lesions. Interacts with UvrC in an incision complex.

It is found in the cytoplasm. Its function is as follows. The UvrABC repair system catalyzes the recognition and processing of DNA lesions. A damage recognition complex composed of 2 UvrA and 2 UvrB subunits scans DNA for abnormalities. Upon binding of the UvrA(2)B(2) complex to a putative damaged site, the DNA wraps around one UvrB monomer. DNA wrap is dependent on ATP binding by UvrB and probably causes local melting of the DNA helix, facilitating insertion of UvrB beta-hairpin between the DNA strands. Then UvrB probes one DNA strand for the presence of a lesion. If a lesion is found the UvrA subunits dissociate and the UvrB-DNA preincision complex is formed. This complex is subsequently bound by UvrC and the second UvrB is released. If no lesion is found, the DNA wraps around the other UvrB subunit that will check the other stand for damage. The sequence is that of UvrABC system protein B from Chlorobium phaeobacteroides (strain BS1).